A 149-amino-acid chain; its full sequence is MDIVAENRKVRFNYTILSEYDAGIVLLGSEVKSLRQHKVSMGDAYVLESGMELWVHNLHISEYNRSSYKNHSPLRVRKLLLRRREINKIAGSVKASGITVVPRLVYFNERGLAKVRIALVKGKKLYDKREAIKAREWEREKGRTMKRDI.

The protein belongs to the SmpB family.

It is found in the cytoplasm. Its function is as follows. Required for rescue of stalled ribosomes mediated by trans-translation. Binds to transfer-messenger RNA (tmRNA), required for stable association of tmRNA with ribosomes. tmRNA and SmpB together mimic tRNA shape, replacing the anticodon stem-loop with SmpB. tmRNA is encoded by the ssrA gene; the 2 termini fold to resemble tRNA(Ala) and it encodes a 'tag peptide', a short internal open reading frame. During trans-translation Ala-aminoacylated tmRNA acts like a tRNA, entering the A-site of stalled ribosomes, displacing the stalled mRNA. The ribosome then switches to translate the ORF on the tmRNA; the nascent peptide is terminated with the 'tag peptide' encoded by the tmRNA and targeted for degradation. The ribosome is freed to recommence translation, which seems to be the essential function of trans-translation. In Anaplasma phagocytophilum (strain HZ), this protein is SsrA-binding protein.